A 289-amino-acid chain; its full sequence is ATP synthase gamma chain (289 aa).

Belongs to the ATPase gamma chain family. In terms of assembly, F-type ATPases have 2 components, CF(1) - the catalytic core - and CF(0) - the membrane proton channel. CF(1) has five subunits: alpha(3), beta(3), gamma(1), delta(1), epsilon(1). CF(0) has three main subunits: a, b and c.

It is found in the cell inner membrane. In terms of biological role, produces ATP from ADP in the presence of a proton gradient across the membrane. The gamma chain is believed to be important in regulating ATPase activity and the flow of protons through the CF(0) complex. In Polynucleobacter asymbioticus (strain DSM 18221 / CIP 109841 / QLW-P1DMWA-1) (Polynucleobacter necessarius subsp. asymbioticus), this protein is ATP synthase gamma chain.